The primary structure comprises 183 residues: Large ribosomal subunit protein uL5 (183 aa).

It belongs to the universal ribosomal protein uL5 family. As to quaternary structure, part of the 50S ribosomal subunit; part of the 5S rRNA/L5/L18/L25 subcomplex. Contacts the 5S rRNA and the P site tRNA. Forms a bridge to the 30S subunit in the 70S ribosome.

Its function is as follows. This is one of the proteins that bind and probably mediate the attachment of the 5S RNA into the large ribosomal subunit, where it forms part of the central protuberance. In the 70S ribosome it contacts protein S13 of the 30S subunit (bridge B1b), connecting the 2 subunits; this bridge is implicated in subunit movement. Contacts the P site tRNA; the 5S rRNA and some of its associated proteins might help stabilize positioning of ribosome-bound tRNAs. This Christiangramia forsetii (strain DSM 17595 / CGMCC 1.15422 / KT0803) (Gramella forsetii) protein is Large ribosomal subunit protein uL5.